We begin with the raw amino-acid sequence, 76 residues long: UPF0291 protein BCE_1981 (76 aa).

It belongs to the UPF0291 family.

The protein localises to the cytoplasm. The polypeptide is UPF0291 protein BCE_1981 (Bacillus cereus (strain ATCC 10987 / NRS 248)).